The primary structure comprises 117 residues: Probable non-functional immunoglobulin heavy variable 1-38-4 (117 aa).

Positions M1 to S19 are cleaved as a signal peptide. The tract at residues Q20–S44 is framework-1. The 98-residue stretch at Q20–R117 folds into the Ig-like domain. The complementarity-determining-1 stretch occupies residues G45 to G52. Positions I53–W69 are framework-2. Residues I70–P77 form a complementarity-determining-2 region. The N-linked (GlcNAc...) asparagine glycan is linked to N74. Residues S78–Y115 are framework-3. The segment at A116–R117 is complementarity-determining-3.

As to quaternary structure, most probably, the immunoglobulin is not assembled due to incorrect folding of heavy chain. Immunoglobulins are composed of two identical heavy chains and two identical light chains; disulfide-linked.

It localises to the secreted. It is found in the cell membrane. Functionally, probable non-functional open reading frame (ORF) of V region of the variable domain of immunoglobulin heavy chains. Non-functional ORF generally cannot participate in the synthesis of a productive immunoglobulin chain due to altered V-(D)-J or switch recombination and/or splicing site (at mRNA level) and/or conserved amino acid change (protein level). Immunoglobulins, also known as antibodies, are membrane-bound or secreted glycoproteins produced by B lymphocytes. In the recognition phase of humoral immunity, the membrane-bound immunoglobulins serve as receptors which, upon binding of a specific antigen, trigger the clonal expansion and differentiation of B lymphocytes into immunoglobulins-secreting plasma cells. Secreted immunoglobulins mediate the effector phase of humoral immunity, which results in the elimination of bound antigens. The antigen binding site is formed by the variable domain of one heavy chain, together with that of its associated light chain. Thus, each immunoglobulin has two antigen binding sites with remarkable affinity for a particular antigen. The variable domains are assembled by a process called V-(D)-J rearrangement and can then be subjected to somatic hypermutations which, after exposure to antigen and selection, allow affinity maturation for a particular antigen. The chain is Probable non-functional immunoglobulin heavy variable 1-38-4 from Homo sapiens (Human).